The primary structure comprises 472 residues: Argininosuccinate lyase (472 aa).

It belongs to the lyase 1 family. Argininosuccinate lyase subfamily.

It is found in the cytoplasm. The enzyme catalyses 2-(N(omega)-L-arginino)succinate = fumarate + L-arginine. It functions in the pathway amino-acid biosynthesis; L-arginine biosynthesis; L-arginine from L-ornithine and carbamoyl phosphate: step 3/3. This chain is Argininosuccinate lyase, found in Mycobacterium avium (strain 104).